The chain runs to 171 residues: Crossover junction endodeoxyribonuclease RuvC (171 aa).

Catalysis depends on residues D11, E71, and D143. Mg(2+)-binding residues include D11, E71, and D143.

It belongs to the RuvC family. In terms of assembly, homodimer which binds Holliday junction (HJ) DNA. The HJ becomes 2-fold symmetrical on binding to RuvC with unstacked arms; it has a different conformation from HJ DNA in complex with RuvA. In the full resolvosome a probable DNA-RuvA(4)-RuvB(12)-RuvC(2) complex forms which resolves the HJ. Requires Mg(2+) as cofactor.

The protein resides in the cytoplasm. The catalysed reaction is Endonucleolytic cleavage at a junction such as a reciprocal single-stranded crossover between two homologous DNA duplexes (Holliday junction).. The RuvA-RuvB-RuvC complex processes Holliday junction (HJ) DNA during genetic recombination and DNA repair. Endonuclease that resolves HJ intermediates. Cleaves cruciform DNA by making single-stranded nicks across the HJ at symmetrical positions within the homologous arms, yielding a 5'-phosphate and a 3'-hydroxyl group; requires a central core of homology in the junction. The consensus cleavage sequence is 5'-(A/T)TT(C/G)-3'. Cleavage occurs on the 3'-side of the TT dinucleotide at the point of strand exchange. HJ branch migration catalyzed by RuvA-RuvB allows RuvC to scan DNA until it finds its consensus sequence, where it cleaves and resolves the cruciform DNA. In Bartonella tribocorum (strain CIP 105476 / IBS 506), this protein is Crossover junction endodeoxyribonuclease RuvC.